A 255-amino-acid chain; its full sequence is 5'-nucleotidase SurE (255 aa).

Aspartate 7, aspartate 8, serine 38, and asparagine 90 together coordinate a divalent metal cation.

The protein belongs to the SurE nucleotidase family. A divalent metal cation serves as cofactor.

Its subcellular location is the cytoplasm. The enzyme catalyses a ribonucleoside 5'-phosphate + H2O = a ribonucleoside + phosphate. Nucleotidase that shows phosphatase activity on nucleoside 5'-monophosphates. In Picrophilus torridus (strain ATCC 700027 / DSM 9790 / JCM 10055 / NBRC 100828 / KAW 2/3), this protein is 5'-nucleotidase SurE.